A 329-amino-acid polypeptide reads, in one-letter code: Peroxidase 73 (329 aa).

The N-terminal stretch at 1–25 (MARFSLVVVVTLSLAISMFPDTTTA) is a signal peptide. 4 cysteine pairs are disulfide-bonded: Cys36–Cys119, Cys69–Cys74, Cys125–Cys325, and Cys204–Cys236. The active-site Proton acceptor is the His67. Ca(2+)-binding residues include Asp68, Val71, Gly73, Asp75, and Ser77. Residue Pro167 coordinates substrate. His197 is a binding site for heme b. Residue Thr198 coordinates Ca(2+). N-linked (GlcNAc...) asparagine glycosylation is present at Asn215. Residues Asp249, Thr252, and Asp257 each coordinate Ca(2+).

It belongs to the peroxidase family. Classical plant (class III) peroxidase subfamily. Heme b is required as a cofactor. Ca(2+) serves as cofactor. In terms of tissue distribution, expressed in the whole plant, with the highest expression in roots.

It localises to the secreted. It catalyses the reaction 2 a phenolic donor + H2O2 = 2 a phenolic radical donor + 2 H2O. Removal of H(2)O(2), oxidation of toxic reductants, biosynthesis and degradation of lignin, suberization, auxin catabolism, response to environmental stresses such as wounding, pathogen attack and oxidative stress. These functions might be dependent on each isozyme/isoform in each plant tissue. This Arabidopsis thaliana (Mouse-ear cress) protein is Peroxidase 73 (PER73).